The chain runs to 436 residues: Chaperone protein dnaJ 16 (436 aa).

Residues 20–85 enclose the J domain; it reads DPYEVLGVLR…EKRRQFDSAG (66 aa). The stretch at 291–348 forms a coiled coil; that stretch reads TQEKEDLRSVEAQILTKRAELAKFETEYREVLVQFTDMTSRYAQEMQSIDELLKQRNE. The interval 360-416 is disordered; it reads KRSSSKNRMRKSSFKKAAAKAPAPTEQEEEEEEEEEEEEESSRQKNKKPSTCDKSET. Residues 362 to 377 show a composition bias toward basic residues; sequence SSSKNRMRKSSFKKAA. Residues 385 to 399 are compositionally biased toward acidic residues; it reads EQEEEEEEEEEEEEE.

This sequence belongs to the DnaJ family. B/II subfamily. As to expression, expressed constitutively in seedlings, roots, leaves, stems, flowers and siliques.

The protein localises to the membrane. Functionally, plays a continuous role in plant development probably in the structural organization of compartments. Seems to not be involved in gravitropism signaling pathway. The chain is Chaperone protein dnaJ 16 (ATJ16) from Arabidopsis thaliana (Mouse-ear cress).